Reading from the N-terminus, the 1358-residue chain is Xanthine dehydrogenase/oxidase (1358 aa).

The 2Fe-2S ferredoxin-type domain occupies 8–95 (DELVFFVNGK…HVAVTTVEGI (88 aa)). Positions 47, 52, 55, 77, 117, 120, 152, and 154 each coordinate [2Fe-2S] cluster. An FAD-binding PCMH-type domain is found at 255 to 440 (FKGERVMWIQ…LSVEIPYSKE (186 aa)). FAD is bound by residues 283–290 (LVVGNTEV), phenylalanine 363, 373–377 (ALGGN), aspartate 386, leucine 430, and lysine 448. 2 residues coordinate Mo-molybdopterin: glutamine 796 and phenylalanine 827. Substrate-binding residues include glutamate 831 and arginine 909. Arginine 941 lines the Mo-molybdopterin pocket. Residues phenylalanine 943 and threonine 1039 each coordinate substrate. A Mo-molybdopterin-binding site is contributed by alanine 1108. Glutamate 1290 acts as the Proton acceptor in catalysis.

It belongs to the xanthine dehydrogenase family. As to quaternary structure, homodimer. It depends on FAD as a cofactor. Requires Mo-molybdopterin as cofactor. [2Fe-2S] cluster serves as cofactor. In terms of tissue distribution, detected in liver (at protein level).

It is found in the peroxisome. Its subcellular location is the cytoplasm. The enzyme catalyses xanthine + NAD(+) + H2O = urate + NADH + H(+). It catalyses the reaction hypoxanthine + NAD(+) + H2O = xanthine + NADH + H(+). The catalysed reaction is xanthine + O2 + H2O = urate + H2O2. In terms of biological role, key enzyme in purine degradation. Catalyzes the oxidation of hypoxanthine to xanthine. Catalyzes the oxidation of xanthine to uric acid. Contributes to the generation of reactive oxygen species. This Gallus gallus (Chicken) protein is Xanthine dehydrogenase/oxidase (XDH).